Reading from the N-terminus, the 343-residue chain is tRNA N6-adenosine threonylcarbamoyltransferase (343 aa).

2 residues coordinate Fe cation: His120 and His124. Residues Val142–Gly146, Asp175, Gly188, Asp192, and Asn281 contribute to the substrate site. Asp310 contacts Fe cation.

The protein belongs to the KAE1 / TsaD family. The cofactor is Fe(2+).

Its subcellular location is the cytoplasm. The enzyme catalyses L-threonylcarbamoyladenylate + adenosine(37) in tRNA = N(6)-L-threonylcarbamoyladenosine(37) in tRNA + AMP + H(+). Functionally, required for the formation of a threonylcarbamoyl group on adenosine at position 37 (t(6)A37) in tRNAs that read codons beginning with adenine. Is involved in the transfer of the threonylcarbamoyl moiety of threonylcarbamoyl-AMP (TC-AMP) to the N6 group of A37, together with TsaE and TsaB. TsaD likely plays a direct catalytic role in this reaction. This Bacillus thuringiensis subsp. konkukian (strain 97-27) protein is tRNA N6-adenosine threonylcarbamoyltransferase.